The following is a 326-amino-acid chain: MAKIYGDEDASLEPLEDKTVAVIGYGSQGEAQAKNLRDSGIDVIIGVREGGPSWERAKKDGFEVLPIPEAAEAGDVVHILIPDEVQPQVYREHIHDNLEKGNALGFSHAYNIHYGLIEPPEYVDVILVAPKGPGHMVRKLYTEGFGTPALVAVHQDYTGEAMDLALAMAKAMGFTRAGVIKTTFREEVETDLFGEQVDLVGGVLYMILYAFETLVEAGYQPEVAYFETLHELKLIVDLIYEKGLSGMLDNVSNTAEYGGLTRGKRIINKEEMRKVLEEIRSGEFAREWTLENESGRIVMKRLREEIENHEIEKVGERLRKMMGFED.

The KARI N-terminal Rossmann domain maps to 2 to 182 (AKIYGDEDAS…GFTRAGVIKT (181 aa)). Residues 25 to 28 (YGSQ), arginine 48, serine 53, and 83 to 86 (DEVQ) contribute to the NADP(+) site. The active site involves histidine 108. Glycine 134 provides a ligand contact to NADP(+). Residues 183–325 (TFREEVETDL…ERLRKMMGFE (143 aa)) enclose the KARI C-terminal knotted domain. Positions 191, 195, 227, and 231 each coordinate Mg(2+). Serine 252 provides a ligand contact to substrate.

It belongs to the ketol-acid reductoisomerase family. Mg(2+) serves as cofactor.

The catalysed reaction is (2R)-2,3-dihydroxy-3-methylbutanoate + NADP(+) = (2S)-2-acetolactate + NADPH + H(+). It carries out the reaction (2R,3R)-2,3-dihydroxy-3-methylpentanoate + NADP(+) = (S)-2-ethyl-2-hydroxy-3-oxobutanoate + NADPH + H(+). The protein operates within amino-acid biosynthesis; L-isoleucine biosynthesis; L-isoleucine from 2-oxobutanoate: step 2/4. It participates in amino-acid biosynthesis; L-valine biosynthesis; L-valine from pyruvate: step 2/4. Involved in the biosynthesis of branched-chain amino acids (BCAA). Catalyzes an alkyl-migration followed by a ketol-acid reduction of (S)-2-acetolactate (S2AL) to yield (R)-2,3-dihydroxy-isovalerate. In the isomerase reaction, S2AL is rearranged via a Mg-dependent methyl migration to produce 3-hydroxy-3-methyl-2-ketobutyrate (HMKB). In the reductase reaction, this 2-ketoacid undergoes a metal-dependent reduction by NADPH to yield (R)-2,3-dihydroxy-isovalerate. The protein is Ketol-acid reductoisomerase (NADP(+)) of Methanopyrus kandleri (strain AV19 / DSM 6324 / JCM 9639 / NBRC 100938).